The chain runs to 475 residues: Dihydrolipoyl dehydrogenase (475 aa).

Residues 37 to 46 (EQYYSLGGVC), Lys-55, and Ala-118 contribute to the FAD site. Cysteines 46 and 51 form a disulfide. NAD(+) is bound by residues 183–187 (GGGII), Asp-206, Val-239, and 272–275 (AIGR). Residues Asp-315 and Ala-323 each coordinate FAD. His-447 functions as the Proton acceptor in the catalytic mechanism.

Belongs to the class-I pyridine nucleotide-disulfide oxidoreductase family. In terms of assembly, homodimer. FAD serves as cofactor.

It is found in the cytoplasm. The enzyme catalyses N(6)-[(R)-dihydrolipoyl]-L-lysyl-[protein] + NAD(+) = N(6)-[(R)-lipoyl]-L-lysyl-[protein] + NADH + H(+). Its function is as follows. Lipoamide dehydrogenase is a component of the alpha-ketoacid dehydrogenase complexes. The protein is Dihydrolipoyl dehydrogenase (lpdA) of Buchnera aphidicola subsp. Baizongia pistaciae (strain Bp).